The primary structure comprises 560 residues: DNA ligase B (560 aa).

Catalysis depends on lysine 124, which acts as the N6-AMP-lysine intermediate.

It belongs to the NAD-dependent DNA ligase family. LigB subfamily.

The catalysed reaction is NAD(+) + (deoxyribonucleotide)n-3'-hydroxyl + 5'-phospho-(deoxyribonucleotide)m = (deoxyribonucleotide)n+m + AMP + beta-nicotinamide D-nucleotide.. Its function is as follows. Catalyzes the formation of phosphodiester linkages between 5'-phosphoryl and 3'-hydroxyl groups in double-stranded DNA using NAD as a coenzyme and as the energy source for the reaction. This Escherichia coli O7:K1 (strain IAI39 / ExPEC) protein is DNA ligase B.